The chain runs to 161 residues: Lipoprotein signal peptidase (161 aa).

3 helical membrane passes run 9 to 29, 63 to 83, and 88 to 108; these read ISLL…WLIT, KMLF…IFYI, and FNLF…GNFI. Catalysis depends on residues D118 and D136. Residues 131–151 form a helical membrane-spanning segment; the sequence is IFNIADSSLTIGVIFVIIALI.

This sequence belongs to the peptidase A8 family.

The protein resides in the cell membrane. It carries out the reaction Release of signal peptides from bacterial membrane prolipoproteins. Hydrolyzes -Xaa-Yaa-Zaa-|-(S,diacylglyceryl)Cys-, in which Xaa is hydrophobic (preferably Leu), and Yaa (Ala or Ser) and Zaa (Gly or Ala) have small, neutral side chains.. Its pathway is protein modification; lipoprotein biosynthesis (signal peptide cleavage). This protein specifically catalyzes the removal of signal peptides from prolipoproteins. This Staphylococcus epidermidis (strain ATCC 12228 / FDA PCI 1200) protein is Lipoprotein signal peptidase.